A 284-amino-acid polypeptide reads, in one-letter code: Ribosomal RNA small subunit methyltransferase A (284 aa).

6 residues coordinate S-adenosyl-L-methionine: His23, Leu25, Gly50, Glu71, Asp92, and Asn121.

This sequence belongs to the class I-like SAM-binding methyltransferase superfamily. rRNA adenine N(6)-methyltransferase family. RsmA subfamily.

Its subcellular location is the cytoplasm. It carries out the reaction adenosine(1518)/adenosine(1519) in 16S rRNA + 4 S-adenosyl-L-methionine = N(6)-dimethyladenosine(1518)/N(6)-dimethyladenosine(1519) in 16S rRNA + 4 S-adenosyl-L-homocysteine + 4 H(+). Its function is as follows. Specifically dimethylates two adjacent adenosines (A1518 and A1519) in the loop of a conserved hairpin near the 3'-end of 16S rRNA in the 30S particle. May play a critical role in biogenesis of 30S subunits. This chain is Ribosomal RNA small subunit methyltransferase A, found in Verminephrobacter eiseniae (strain EF01-2).